Here is a 263-residue protein sequence, read N- to C-terminus: Polyglutamine-binding protein 1 (263 aa).

Positions 46-80 constitute a WW domain; that stretch reads EGLPPSWYKVFDPSCGLPYYWNVDTDLVSWLSPHD. A Phosphoserine modification is found at serine 94. The tract at residues 94–263 is disordered; it reads SSNADAEEKL…AEASRTKQQD (170 aa). Residues 99–173 are compositionally biased toward basic and acidic residues; the sequence is AEEKLDRSHE…DKVDREESKE (75 aa). Repeat copies occupy residues 104 to 110, 111 to 117, 118 to 124, 125 to 131, 132 to 138, 139 to 140, 141 to 142, 143 to 144, 150 to 151, 152 to 153, 154 to 155, 156 to 157, 158 to 159, and 160 to 161. A 5 X 7 AA approximate tandem repeats of D-R-[SG]-H-D-K-S region spans residues 104-138; the sequence is DRSHEKSDRGHEKSDRGHEKSDRSHEKSERNHEKS. The tract at residues 139–144 is 3 X 2 AA tandem repeats of [DE]-R; it reads DRDRER. Residues 150 to 161 are 6 X 2 AA tandem repeats of [DE]-R; that stretch reads DRERERDRDRDR. The tract at residues 243–253 is important for interaction with TXNL4A; the sequence is YPSPGAVLRAN. Serine 245 carries the post-translational modification Phosphoserine.

Interacts with POU3F2/Brn-2, ATXN1, TXNL4A, HTT and AR. Interaction with ATXN1 correlates positively with the length of the polyglutamine tract. Interacts with RNA polymerase II large subunit in a phosphorylation-dependent manner. Forms a ternary complex with ATXN1 mutant and phosphorylated RNA polymerase II. Interacts (via C-terminus) with TXNL4A and CD2BP2. Interacts (via WW domain) with ATN1 and SF3B1, and may interact with additional splice factors. Interacts (via WW domain) with WBP11; Leading to reduce interaction between PQBP1 and TXNL4A. Interacts with CAPRIN1. Interacts with DDX1. Interacts with SFPQ. Interacts with KHSRP.

The protein resides in the nucleus. It localises to the nucleus speckle. The protein localises to the cytoplasmic granule. Functionally, intrinsically disordered protein that acts as a scaffold, and which is involved in different processes, such as pre-mRNA splicing, transcription regulation, innate immunity and neuron development. Interacts with splicing-related factors via the intrinsically disordered region and regulates alternative splicing of target pre-mRNA species. May suppress the ability of POU3F2 to transactivate the DRD1 gene in a POU3F2 dependent manner. Can activate transcription directly or via association with the transcription machinery. May be involved in ATXN1 mutant-induced cell death. The interaction with ATXN1 mutant reduces levels of phosphorylated RNA polymerase II large subunit. Involved in the assembly of cytoplasmic stress granule, possibly by participating in the transport of neuronal RNA granules. Also acts as an innate immune sensor of infection by retroviruses, by detecting the presence of reverse-transcribed DNA in the cytosol. Directly binds retroviral reverse-transcribed DNA in the cytosol and interacts with CGAS, leading to activate the cGAS-STING signaling pathway, triggering type-I interferon production. This chain is Polyglutamine-binding protein 1 (PQBP1), found in Bos taurus (Bovine).